We begin with the raw amino-acid sequence, 261 residues long: Neurexophilin-2 (261 aa).

An N-terminal signal peptide occupies residues methionine 1–serine 22. Positions glutamate 23–isoleucine 87 are II. N-linked (GlcNAc...) asparagine glycans are attached at residues asparagine 83, asparagine 136, asparagine 146, and asparagine 152. The tract at residues glutamine 88–phenylalanine 166 is III. Residues glutamate 167–glutamate 175 form an IV (linker domain) region. The v (Cys-rich) stretch occupies residues threonine 176–glycine 261.

This sequence belongs to the neurexophilin family. Post-translationally, may be proteolytically processed at the boundary between the N-terminal non-conserved and the central conserved domain in neuron-like cells.

It localises to the secreted. May be signaling molecules that resemble neuropeptides and that act by binding to alpha-neurexins and possibly other receptors. This chain is Neurexophilin-2 (Nxph2), found in Mus musculus (Mouse).